Here is a 288-residue protein sequence, read N- to C-terminus: MKDRTQELRSAKDSDDEEEVVHVDRDHFMDEFFEQVEEIRGCIEKLSEDVEQVKKQHSAILAAPNPDEKTKQELEDLTTDIKKTANKVRSKLKAIEQSIEQEEGLNRSSADLRIRKTQHSTLSRKFVEVMTEYNATQSKYRDRCKDRIQRQLEITGRTTTNEELEDMLESGKLAIFTDDIKMDSQMTKQALNEIETRHNEIIKLETSIRELHDMFVDMAMLVESQGEMIDRIEYNVEHSVDYVERAVSDTKKAVKYQSKARRKKIMIIICCVVLGVVLASSIGGTLGL.

Residues 1–13 (MKDRTQELRSAKD) are compositionally biased toward basic and acidic residues. A disordered region spans residues 1-20 (MKDRTQELRSAKDSDDEEEV). Topologically, residues 1-264 (MKDRTQELRS…KYQSKARRKK (264 aa)) are cytoplasmic. Ser10 and Ser14 each carry phosphoserine. A coiled-coil region spans residues 29 to 104 (MDEFFEQVEE…IEQSIEQEEG (76 aa)). The t-SNARE coiled-coil homology domain occupies 191-253 (LNEIETRHNE…ERAVSDTKKA (63 aa)). A helical; Anchor for type IV membrane protein membrane pass occupies residues 265-288 (IMIIICCVVLGVVLASSIGGTLGL).

Belongs to the syntaxin family. As to quaternary structure, interacts with OTOF. Interacts with SYT6 and SYT8; the interaction is Ca(2+)-dependent. Phosphorylated by CK2. Post-translationally, (Microbial infection) Targeted and hydrolyzed by C.botulinum neurotoxin type C (BoNT/C); cleavage by BoNT/C inhibits neurotransmitter release. Probably hydrolyzes the 252-Lys-|-Ala-253 bond.

The protein localises to the membrane. In terms of biological role, potentially involved in docking of synaptic vesicles at presynaptic active zones. May mediate Ca(2+)-regulation of exocytosis acrosomal reaction in sperm. The protein is Syntaxin-1B (STX1B) of Bos taurus (Bovine).